The sequence spans 197 residues: NADH-quinone oxidoreductase subunit C (197 aa).

It belongs to the complex I 30 kDa subunit family. In terms of assembly, NDH-1 is composed of 14 different subunits. Subunits NuoB, C, D, E, F, and G constitute the peripheral sector of the complex.

It localises to the cell inner membrane. The catalysed reaction is a quinone + NADH + 5 H(+)(in) = a quinol + NAD(+) + 4 H(+)(out). NDH-1 shuttles electrons from NADH, via FMN and iron-sulfur (Fe-S) centers, to quinones in the respiratory chain. The immediate electron acceptor for the enzyme in this species is believed to be ubiquinone. Couples the redox reaction to proton translocation (for every two electrons transferred, four hydrogen ions are translocated across the cytoplasmic membrane), and thus conserves the redox energy in a proton gradient. In Neisseria meningitidis serogroup C (strain 053442), this protein is NADH-quinone oxidoreductase subunit C.